The primary structure comprises 302 residues: Mitochondrial adapter protein MCP1 (302 aa).

Residues 1-35 (MIKLHEVPPEPVDPASLPHDVNAHSPEGDGNPDKR) are disordered. The Cytoplasmic segment spans residues 1 to 61 (MIKLHEVPPE…RFLWNCQKIS (61 aa)). Residues 4-12 (LHEVPPEPV) carry the PxP motif. The helical transmembrane segment at 62 to 82 (VLPMALYFPLHAANTLITPAV) threads the bilayer. At 83–100 (SPDSAPDDVLMMVREILP) the chain is on the mitochondrial intermembrane side. A helical membrane pass occupies residues 101 to 121 (SITTKLLVAGITLHVSAGVLL). Residues 122-173 (RIVNNWNKPRRNRHRHLKISAEQDLSQDSIGLTGGISGYLFGLYKTFRIPPQ) lie on the Cytoplasmic side of the membrane. The helical transmembrane segment at 174–194 (VISGYILVPVLIYHLLIMKWV) threads the bilayer. Topologically, residues 195–219 (PNSISTEVDFASIKQLLSSKNRWWK) are mitochondrial intermembrane. A helical membrane pass occupies residues 220–240 (WLGGLVPLAILLESGVYHIGS). Residues 241–258 (GLCRYFGVRKMTSRKKWS) lie on the Cytoplasmic side of the membrane. A helical transmembrane segment spans residues 259–276 (TAINLLTLVGFVSLIRLM). Residues 277 to 302 (KEDSTKLGPNQFESIFKKIRLLLHVN) lie on the Mitochondrial intermembrane side of the membrane.

As to quaternary structure, interacts (via PxP motif) with VPS13 (via SHR-BD domain).

The protein resides in the mitochondrion outer membrane. Its function is as follows. Recruits the lipid transfer protein Vps13 to mitochondria thereby promoting vacuole-mitochondria contacts. Involved in mitochondrial lipid homeostasis. This is Mitochondrial adapter protein MCP1 from Saccharomyces cerevisiae (strain ATCC 204508 / S288c) (Baker's yeast).